The following is a 480-amino-acid chain: Outer capsid protein VP5 (480 aa).

Residues 1-48 are involved in membrane permeabilization; the sequence is MTSKRLGARFPGFLNRIGSGITRAARSDTTKRIPSAAGRAVERVAASE.

It belongs to the orbivirus VP5 family.

The protein localises to the virion. VP5 protein is one of the two proteins (with VP2) which constitute the virus particle outer capsid. Acts as a membrane permeabilization protein that mediates release of viral particles from endosomal compartments into the cytoplasm. Permeabilization activity is probably negatively regulated by VP2 and is triggered by endosomal degradation of VP2 and exposure to low pH. In Ixodes (gulls), this protein is Outer capsid protein VP5 (Segment-6).